The primary structure comprises 272 residues: MPLTPADVHNVAFSKPPIGKRGYNEDEVDAFLDLVENELTRLIEENADLRQRVAELDQELAAARSGAGASSQATSSIPLYEPEPEPAPAPPQPVYEAPAQPAAPQSEDTAVRAARVLSLAQDTADRLTSTAKAEADKLLSDARAQAEAMVSDARQTAETTVSEARQRADAMLADAQTRSEAQLRQAQEKADALQADAERKHSEIMGTINQQRTVLEGRLEQLRTFEREYRTRLKTYLESQLEELGQRGSAAPVDSSANSDASGFGQFNRGNN.

Disordered regions lie at residues 1-22 (MPLTPADVHNVAFSKPPIGKRG) and 62-109 (AARS…SEDT). Positions 30–67 (AFLDLVENELTRLIEENADLRQRVAELDQELAAARSGA) form a coiled coil. Low complexity-rich tracts occupy residues 62-76 (AARSGAGASSQATSS) and 94-105 (VYEAPAQPAAPQ). Position 74 is a phosphothreonine (Thr-74). Positions 139–206 (LSDARAQAEA…AERKHSEIMG (68 aa)) form a coiled coil. The interval 243–272 (ELGQRGSAAPVDSSANSDASGFGQFNRGNN) is disordered.

It belongs to the DivIVA family. As to quaternary structure, forms homooligomers. Interacts with PbpB and CwsA. In terms of processing, phosphorylated by PknA.

It is found in the cytoplasm. Important for maintaining cell shape and cell wall integrity by localizing peptidoglycan synthesis to the cell poles. Protects PbpB (PBP3, FtsI) from oxidative stress-induced cleavage. This chain is Cell wall synthesis protein Wag31 (wag31), found in Mycolicibacterium smegmatis (strain ATCC 700084 / mc(2)155) (Mycobacterium smegmatis).